Here is a 642-residue protein sequence, read N- to C-terminus: MPVITLPDGSQRHYDHPVSPMDVALDIGPGLAKATIAGRVNGELVDASDLIENDATLSIITAKDEEGLEIIRHSCAHLLGHAIKQLWPHTKMAIGPVVDNGFYYDVDLDRTLTQEDVEALEKRMHELAEKNYDVIKKKVSWHDARETFVKRGETYKVAILDENIAHDDKPGLYHHEEYVDMCRGPHVPNMRFCHHFKLMKTAGAYWRGDSNNKMLQRIYGTAWADKKALNAYLQRLEEAAKRDHRKIGKQLDLYHMQEEAPGMVFWHNDGWTIFRELEVFVRSKLKEYQYQEVKGPFMMDRVLWEKTGHWDNYKDAMFTTSSENREYCIKPMNCPGHVQIFNQGLKSYRDLPLRMAEFGSCHRNEPSGALHGLMRVRGFTQDDAHIFCTEEQIRDEVNACIRMVYDMYSTFGFEKIVVKLSTRPDKRIGSDEMWDRAEADLAVALEENNIPFEYQLGEGAFYGPKIEFTLYDCLDRAWQCGTVQLDFSLPSRLSASYVGEDNERKVPVMIHRAILGSMERFIGILTEEFAGFFPTWLAPVQVVVMNITDSQSEYVNELTQKLQNAGIRVKADLRNEKIGFKIREHTLRRVPYMLVCGDKEVEAGKVAVRTRRGKDLGSLDVNDVIEKLQQEIRSRSLQQLEE.

Positions 1-61 (MPVITLPDGS…ENDATLSIIT (61 aa)) constitute a TGS domain. Residues 243-534 (DHRKIGKQLD…LTEEFAGFFP (292 aa)) form a catalytic region. Zn(2+)-binding residues include Cys334, His385, and His511.

Belongs to the class-II aminoacyl-tRNA synthetase family. In terms of assembly, homodimer. Zn(2+) is required as a cofactor.

Its subcellular location is the cytoplasm. The enzyme catalyses tRNA(Thr) + L-threonine + ATP = L-threonyl-tRNA(Thr) + AMP + diphosphate + H(+). Its function is as follows. Catalyzes the attachment of threonine to tRNA(Thr) in a two-step reaction: L-threonine is first activated by ATP to form Thr-AMP and then transferred to the acceptor end of tRNA(Thr). Also edits incorrectly charged L-seryl-tRNA(Thr). In Salmonella heidelberg (strain SL476), this protein is Threonine--tRNA ligase.